Consider the following 283-residue polypeptide: Elongation factor Ts (283 aa).

The involved in Mg(2+) ion dislocation from EF-Tu stretch occupies residues 79–82 (TDFV).

It belongs to the EF-Ts family.

The protein resides in the cytoplasm. Functionally, associates with the EF-Tu.GDP complex and induces the exchange of GDP to GTP. It remains bound to the aminoacyl-tRNA.EF-Tu.GTP complex up to the GTP hydrolysis stage on the ribosome. This is Elongation factor Ts from Shewanella frigidimarina (strain NCIMB 400).